The following is a 388-amino-acid chain: S-adenosylmethionine synthase (388 aa).

Residue histidine 16 coordinates ATP. Residue aspartate 18 coordinates Mg(2+). A K(+)-binding site is contributed by glutamate 44. Glutamate 57 and glutamine 100 together coordinate L-methionine. The flexible loop stretch occupies residues 100-110 (QSPEIAQGVDR). ATP-binding positions include 165–167 (DAK), aspartate 240, 246–247 (RK), alanine 263, and lysine 267. Aspartate 240 contacts L-methionine. L-methionine is bound at residue lysine 271.

Belongs to the AdoMet synthase family. Homotetramer; dimer of dimers. The cofactor is Mg(2+). Requires K(+) as cofactor.

Its subcellular location is the cytoplasm. It carries out the reaction L-methionine + ATP + H2O = S-adenosyl-L-methionine + phosphate + diphosphate. It functions in the pathway amino-acid biosynthesis; S-adenosyl-L-methionine biosynthesis; S-adenosyl-L-methionine from L-methionine: step 1/1. Catalyzes the formation of S-adenosylmethionine (AdoMet) from methionine and ATP. The overall synthetic reaction is composed of two sequential steps, AdoMet formation and the subsequent tripolyphosphate hydrolysis which occurs prior to release of AdoMet from the enzyme. The sequence is that of S-adenosylmethionine synthase from Acinetobacter baylyi (strain ATCC 33305 / BD413 / ADP1).